The sequence spans 287 residues: Protease HtpX (287 aa).

2 helical membrane passes run 4 to 24 (IFLLIATNLAVLLVASIVMSI) and 33 to 53 (GGLLVFAAIFGFGGAFISLAI). Residue histidine 139 coordinates Zn(2+). The active site involves glutamate 140. Histidine 143 is a Zn(2+) binding site. Helical transmembrane passes span 154-174 (LIQGVVNTFVIFAARVVAGII) and 195-215 (AVVFVLDMLFGILASIIVAYF). Zn(2+) is bound at residue glutamate 220.

The protein belongs to the peptidase M48B family. It depends on Zn(2+) as a cofactor.

It is found in the cell inner membrane. This is Protease HtpX from Shewanella baltica (strain OS185).